The chain runs to 189 residues: MDQLRQSLLDAPIIEKGEYQYFVHPISDGVPMLKPELLREIVIRIIRKAELENVDKIVTPAAMGIHISTALSLMTDIPLVVIRKRQYGLDGEVPLFQETGYSESEMYINDVEEGDRVLVLDDVLSTGGTMKAILDALTDEVGAEVVDVVAVIKKAGENELDDTDYNVKTLINVTVEDGEVVIVDAKGDD.

Belongs to the purine/pyrimidine phosphoribosyltransferase family. Archaeal HPRT subfamily.

In terms of biological role, may catalyze a purine salvage reaction, the substrate is unknown. The sequence is that of HGPRTase-like protein from Halorubrum lacusprofundi (strain ATCC 49239 / DSM 5036 / JCM 8891 / ACAM 34).